A 326-amino-acid polypeptide reads, in one-letter code: L-threo-3-hydroxyaspartate ammonia-lyase (326 aa).

Lys53 is subject to N6-(pyridoxal phosphate)lysine. Pyridoxal 5'-phosphate contacts are provided by residues Asn80, 179-183 (GGGGL), and Ser304.

This sequence belongs to the serine/threonine dehydratase family. Monomer. The cofactor is pyridoxal 5'-phosphate. Requires Mn(2+) as cofactor. Mg(2+) is required as a cofactor. It depends on Ca(2+) as a cofactor.

It carries out the reaction (3S)-3-hydroxy-L-aspartate = oxaloacetate + NH4(+). Its activity is regulated as follows. Is strongly inhibited by hydroxylamine and EDTA in vitro. In terms of biological role, catalyzes the deamination of L-threo-3-hydroxyaspartate to oxaloacetate and ammonia. Shows a high specificity towards L-threo-3-hydroxyaspartate as other 3-hydroxyaminoacids, i.e. D,L-erythro- and D-threo-3-hydroxyaspartate, D-threonine, L-threonine, D,L-allothreonine, D-serine, and L-serine, are not substrates for this enzyme. Exhibits no detectable serine racemase activity. Is responsible for the 3-hydroxyaspartate resistance of S.cerevisiae, and thus may be involved in the detoxification of naturally occurring 3-hydroxyaspartate. The chain is L-threo-3-hydroxyaspartate ammonia-lyase (SRY1) from Saccharomyces cerevisiae (strain ATCC 204508 / S288c) (Baker's yeast).